A 1259-amino-acid chain; its full sequence is Trafficking protein particle complex II-specific subunit 130 homolog (1259 aa).

Alanine 2 bears the N-acetylalanine mark. The tract at residues 479–526 (GNIPEMFDGRPSFTEGSGLEASPRTPSSLKVQAPPMSRTNSSPGNFES) is disordered.

Belongs to the TMEM1 family. As to quaternary structure, part of the multisubunit TRAPP (transport protein particle) II complex composed of BET3, BET5, TRS20, TRS23, TRS31, TRS33, TRS65, TRS85, TRS120 and TRS130.

Its subcellular location is the golgi apparatus. The protein localises to the trans-Golgi network. It is found in the early endosome. In terms of biological role, specific subunit of the TRAPP II complex, a highly conserved vesicle tethering complex that is required for the proper transport of proteins in post-Golgi trafficking pathways to the growing cell plate in mitotic active cells. Required for the polarized and selective transport of PIN2, but not PIN1, to the plasma membrane. Not required for ER-to-Golgi as well as biosynthetic and endocytic vacuolar transport. The protein is Trafficking protein particle complex II-specific subunit 130 homolog of Arabidopsis thaliana (Mouse-ear cress).